The following is a 128-amino-acid chain: Fluoride-specific ion channel FluC (128 aa).

The next 4 helical transmembrane spans lie at 6–26, 36–56, 68–88, and 99–119; these read LVAL…GLVL, LPTF…AGLA, VLLF…GLET, and IAAA…WLGF. Na(+) is bound by residues G76 and T79.

It belongs to the fluoride channel Fluc/FEX (TC 1.A.43) family.

The protein localises to the cell inner membrane. The enzyme catalyses fluoride(in) = fluoride(out). With respect to regulation, na(+) is not transported, but it plays an essential structural role and its presence is essential for fluoride channel function. Its function is as follows. Fluoride-specific ion channel. Important for reducing fluoride concentration in the cell, thus reducing its toxicity. The protein is Fluoride-specific ion channel FluC of Methylobacillus flagellatus (strain ATCC 51484 / DSM 6875 / VKM B-1610 / KT).